The following is a 251-amino-acid chain: 1-(5-phosphoribosyl)-5-[(5-phosphoribosylamino)methylideneamino] imidazole-4-carboxamide isomerase (251 aa).

Asp8 acts as the Proton acceptor in catalysis. Asp131 (proton donor) is an active-site residue.

The protein belongs to the HisA/HisF family.

The protein localises to the cytoplasm. It catalyses the reaction 1-(5-phospho-beta-D-ribosyl)-5-[(5-phospho-beta-D-ribosylamino)methylideneamino]imidazole-4-carboxamide = 5-[(5-phospho-1-deoxy-D-ribulos-1-ylimino)methylamino]-1-(5-phospho-beta-D-ribosyl)imidazole-4-carboxamide. Its pathway is amino-acid biosynthesis; L-histidine biosynthesis; L-histidine from 5-phospho-alpha-D-ribose 1-diphosphate: step 4/9. This chain is 1-(5-phosphoribosyl)-5-[(5-phosphoribosylamino)methylideneamino] imidazole-4-carboxamide isomerase, found in Burkholderia ambifaria (strain MC40-6).